The sequence spans 168 residues: Lipoprotein signal peptidase (168 aa).

The next 3 helical transmembrane spans lie at 15-35 (AIAA…LGLL), 69-89 (WGRW…AVWV), and 95-115 (PLLA…NLID). Active-site residues include aspartate 124 and aspartate 141. Residues 133–153 (FPWVFNIADSGISVGVALLLL) traverse the membrane as a helical segment.

The protein belongs to the peptidase A8 family.

It localises to the cell inner membrane. The catalysed reaction is Release of signal peptides from bacterial membrane prolipoproteins. Hydrolyzes -Xaa-Yaa-Zaa-|-(S,diacylglyceryl)Cys-, in which Xaa is hydrophobic (preferably Leu), and Yaa (Ala or Ser) and Zaa (Gly or Ala) have small, neutral side chains.. Its pathway is protein modification; lipoprotein biosynthesis (signal peptide cleavage). This protein specifically catalyzes the removal of signal peptides from prolipoproteins. The sequence is that of Lipoprotein signal peptidase from Caulobacter vibrioides (strain ATCC 19089 / CIP 103742 / CB 15) (Caulobacter crescentus).